We begin with the raw amino-acid sequence, 122 residues long: Holo-[acyl-carrier-protein] synthase (122 aa).

Residues aspartate 8 and glutamate 56 each coordinate Mg(2+).

It belongs to the P-Pant transferase superfamily. AcpS family. Requires Mg(2+) as cofactor.

Its subcellular location is the cytoplasm. The catalysed reaction is apo-[ACP] + CoA = holo-[ACP] + adenosine 3',5'-bisphosphate + H(+). Its function is as follows. Transfers the 4'-phosphopantetheine moiety from coenzyme A to a Ser of acyl-carrier-protein. The protein is Holo-[acyl-carrier-protein] synthase of Alkaliphilus oremlandii (strain OhILAs) (Clostridium oremlandii (strain OhILAs)).